The sequence spans 498 residues: ATP synthase subunit beta, chloroplastic (498 aa).

ATP is bound at residue 172 to 179; it reads GGAGVGKT.

Belongs to the ATPase alpha/beta chains family. As to quaternary structure, F-type ATPases have 2 components, CF(1) - the catalytic core - and CF(0) - the membrane proton channel. CF(1) has five subunits: alpha(3), beta(3), gamma(1), delta(1), epsilon(1). CF(0) has four main subunits: a(1), b(1), b'(1) and c(9-12).

The protein resides in the plastid. Its subcellular location is the chloroplast thylakoid membrane. The catalysed reaction is ATP + H2O + 4 H(+)(in) = ADP + phosphate + 5 H(+)(out). Functionally, produces ATP from ADP in the presence of a proton gradient across the membrane. The catalytic sites are hosted primarily by the beta subunits. The sequence is that of ATP synthase subunit beta, chloroplastic from Chamaerops humilis (Mediterranean fan palm).